A 148-amino-acid polypeptide reads, in one-letter code: C-C motif chemokine 2 (148 aa).

A signal peptide spans 1 to 23; the sequence is MQVPVMLLGLLFTVAGWSIHVLA. Gln24 carries the pyrrolidone carboxylic acid modification. 2 cysteine pairs are disulfide-bonded: Cys34/Cys59 and Cys35/Cys75. A glycan (N-linked (GlcNAc...) asparagine) is linked at Asn126.

Belongs to the intercrine beta (chemokine CC) family. Monomer or homodimer; in equilibrium. Is tethered on endothelial cells by glycosaminoglycan (GAG) side chains of proteoglycans. Interacts with TNFAIP6 (via Link domain). Post-translationally, processing at the N-terminus can regulate receptor and target cell selectivity. Deletion of the N-terminal residue converts it from an activator of basophil to an eosinophil chemoattractant. In terms of processing, N-Glycosylated.

The protein resides in the secreted. In terms of biological role, acts as a ligand for C-C chemokine receptor CCR2. Signals through binding and activation of CCR2 and induces a strong chemotactic response and mobilization of intracellular calcium ions. Exhibits a chemotactic activity for monocytes and basophils but not neutrophils or eosinophils. Plays an important role in mediating peripheral nerve injury-induced neuropathic pain. Increases NMDA-mediated synaptic transmission in both dopamine D1 and D2 receptor-containing neurons, which may be caused by MAPK/ERK-dependent phosphorylation of GRIN2B/NMDAR2B. The protein is C-C motif chemokine 2 (Ccl2) of Mus musculus (Mouse).